The primary structure comprises 663 residues: UvrABC system protein B (663 aa).

Over residues 1–10 the composition is skewed to basic and acidic residues; sequence MIDKRDDKPF. Residues 1 to 23 are disordered; it reads MIDKRDDKPFKLKSKYKPSGDQP. The 241-residue stretch at 31-271 folds into the Helicase ATP-binding domain; that stretch reads DNIEGGEKAQ…EQSIAKIQAE (241 aa). Residue 44–51 coordinates ATP; that stretch reads GATGTGKT. The Beta-hairpin motif lies at 97-120; that stretch reads YYDYYQPEAYVPSSDTYIEKDSSV. Residues 435-601 form the Helicase C-terminal domain; the sequence is QMDDLLGEIN…TIKKDIRGLI (167 aa). Residues 627–662 enclose the UVR domain; that stretch reads KEAINALQKQMQEAAELLDFELAAQMRDLILELKLM.

This sequence belongs to the UvrB family. As to quaternary structure, forms a heterotetramer with UvrA during the search for lesions. Interacts with UvrC in an incision complex.

Its subcellular location is the cytoplasm. The UvrABC repair system catalyzes the recognition and processing of DNA lesions. A damage recognition complex composed of 2 UvrA and 2 UvrB subunits scans DNA for abnormalities. Upon binding of the UvrA(2)B(2) complex to a putative damaged site, the DNA wraps around one UvrB monomer. DNA wrap is dependent on ATP binding by UvrB and probably causes local melting of the DNA helix, facilitating insertion of UvrB beta-hairpin between the DNA strands. Then UvrB probes one DNA strand for the presence of a lesion. If a lesion is found the UvrA subunits dissociate and the UvrB-DNA preincision complex is formed. This complex is subsequently bound by UvrC and the second UvrB is released. If no lesion is found, the DNA wraps around the other UvrB subunit that will check the other stand for damage. The chain is UvrABC system protein B from Streptococcus pyogenes serotype M4 (strain MGAS10750).